Consider the following 247-residue polypeptide: Homeobox-leucine zipper protein HOX17 (247 aa).

The interval 58–81 (ERAGLRGGGGSDEEDGGCGIDGSR) is disordered. The segment at residues 79 to 138 (GSRKKLRLSKDQSAVLEDSFREHPTLNPRQKATLAQQLGLRPRQVEVWFQNRRARTKLKQ) is a DNA-binding region (homeobox). The tract at residues 137–182 (KQTEVDCEFLKRCCETLTEENRRLQKEVQELRALKLVSPHLYMNMS) is leucine-zipper.

The protein belongs to the HD-ZIP homeobox family. Class II subfamily. In terms of tissue distribution, expressed in seedlings, roots, stems, leaf sheaths and blades and panicles.

The protein resides in the nucleus. Probable transcription factor. The polypeptide is Homeobox-leucine zipper protein HOX17 (HOX17) (Oryza sativa subsp. indica (Rice)).